A 654-amino-acid polypeptide reads, in one-letter code: Pentatricopeptide repeat-containing protein At4g19191, mitochondrial (654 aa).

Residues 1–65 (MSLIHRRLYR…PFVAKACARL (65 aa)) constitute a mitochondrion transit peptide. PPR repeat units lie at residues 86 to 116 (DVFV…MPER), 117 to 151 (DATT…EITP), 152 to 186 (DSVT…GVDV), 187 to 217 (QVTV…IDRG), 220 to 254 (TVVS…EFKP), 255 to 289 (DLST…GTDQ), 290 to 320 (DIEA…MTSR), 321 to 355 (TCVS…GEKP), 356 to 390 (DLVT…GCKR), 392 to 422 (NVMI…TPEK), 423 to 457 (TVVT…DYKP), 458 to 488 (NHIT…MKQV), and 494 to 524 (GLDH…MSAK). Residues 529-604 (IWGALLNACK…YPGESVIQVN (76 aa)) are type E motif. The tract at residues 605–635 (GKNHSFTVGEHGHVENEVIYFTLNGLSLFAK) is type E(+) motif.

The protein belongs to the PPR family. PCMP-E subfamily.

The protein localises to the mitochondrion. This chain is Pentatricopeptide repeat-containing protein At4g19191, mitochondrial (PCMP-E1), found in Arabidopsis thaliana (Mouse-ear cress).